A 464-amino-acid polypeptide reads, in one-letter code: DNA primase DnaG (464 aa).

The Toprim domain occupies 198–272 (DSIIVVEGRA…DVDYVARAPE (75 aa)). E204, D246, and D248 together coordinate Mg(2+). Over residues 315–333 (RESEGERQPRQVTKPEPEV) the composition is skewed to basic and acidic residues. The segment at 315 to 351 (RESEGERQPRQVTKPEPEVVKAQPKAETPEEKREPAT) is disordered.

Belongs to the archaeal DnaG primase family. In terms of assembly, forms a ternary complex with MCM helicase and DNA. Component of the archaeal exosome complex. The cofactor is Mg(2+).

The enzyme catalyses ssDNA + n NTP = ssDNA/pppN(pN)n-1 hybrid + (n-1) diphosphate.. Its function is as follows. RNA polymerase that catalyzes the synthesis of short RNA molecules used as primers for DNA polymerase during DNA replication. Also part of the exosome, which is a complex involved in RNA degradation. Acts as a poly(A)-binding protein that enhances the interaction between heteromeric, adenine-rich transcripts and the exosome. The polypeptide is DNA primase DnaG (Thermococcus kodakarensis (strain ATCC BAA-918 / JCM 12380 / KOD1) (Pyrococcus kodakaraensis (strain KOD1))).